The primary structure comprises 71 residues: Small ribosomal subunit protein bS21 (71 aa).

Belongs to the bacterial ribosomal protein bS21 family.

This Hydrogenovibrio crunogenus (strain DSM 25203 / XCL-2) (Thiomicrospira crunogena) protein is Small ribosomal subunit protein bS21.